The following is a 363-amino-acid chain: GTP-binding protein 1 (363 aa).

In terms of domain architecture, OBG-type G spans Ala63–Asn287. Residues Gly69–Ser76, Asp115–Ile119, and Lys246–Ala249 each bind GTP. Residues Asn287–Thr362 enclose the TGS domain.

It belongs to the TRAFAC class OBG-HflX-like GTPase superfamily. OBG GTPase family.

The chain is GTP-binding protein 1 (gtp1) from Schizosaccharomyces pombe (strain 972 / ATCC 24843) (Fission yeast).